Consider the following 415-residue polypeptide: Esterase FrsA (415 aa).

This sequence belongs to the FrsA family.

The enzyme catalyses a carboxylic ester + H2O = an alcohol + a carboxylate + H(+). Catalyzes the hydrolysis of esters. This Vibrio parahaemolyticus serotype O3:K6 (strain RIMD 2210633) protein is Esterase FrsA.